Here is a 95-residue protein sequence, read N- to C-terminus: Small ribosomal subunit protein uS19 (95 aa).

Belongs to the universal ribosomal protein uS19 family.

Its function is as follows. Protein S19 forms a complex with S13 that binds strongly to the 16S ribosomal RNA. This chain is Small ribosomal subunit protein uS19, found in Myxococcus xanthus (strain DK1622).